The chain runs to 571 residues: Endonuclease/exonuclease/phosphatase family domain-containing protein 1 (571 aa).

The segment at 1–20 is disordered; the sequence is MGSTLGCHRSIPRDPSDLSH. G2 carries N-myristoyl glycine lipidation. The span at 11 to 20 shows a compositional bias: basic and acidic residues; that stretch reads IPRDPSDLSH. S16, S21, and S25 each carry phosphoserine. The HhH domain occupies 38–67; it reads ERLNINTATEEELMTLPGVTRAVARSIVEY. 4 positions are modified to phosphoserine: S106, S110, S162, and S175. The segment at 202 to 227 is disordered; that stretch reads SRPPSTHTNGGLTFTAKPHPSPTSLS. A compositionally biased stretch (polar residues) spans 204-213; the sequence is PPSTHTNGGL. T267 carries the post-translational modification Phosphothreonine. At S430 the chain carries Phosphoserine. A disordered region spans residues 548–571; it reads RKEGPRSGNGLTLERSEANIKHER. Over residues 561-571 the composition is skewed to basic and acidic residues; the sequence is ERSEANIKHER.

This chain is Endonuclease/exonuclease/phosphatase family domain-containing protein 1 (EEPD1), found in Bos taurus (Bovine).